The primary structure comprises 549 residues: DDB1- and CUL4-associated factor 11 (549 aa).

The segment covering 1 to 24 (MGSRNSSSAGSGSLEPSEGLSRRG) has biased composition (low complexity). The disordered stretch occupies residues 1–40 (MGSRNSSSAGSGSLEPSEGLSRRGTGLRRSEEEEEEDEDV). Phosphoserine occurs at positions 73 and 75. 7 WD repeats span residues 170-210 (TYSQ…HKFK), 216-258 (DVGW…TALD), 263-302 (ERRFAVFSIAVSSDGREVLGGANDGCLYVFDREQNRRTLQ), 305-345 (SHED…EDDP), 353-392 (GHQDGITFIDSKGDARYLISNSKDQTIKLWDIRRFSSREG), 435-480 (GVLH…KKLT), and 481-520 (NHKACVRDVSWHPFEEKIVSSSWDGNLRLWQYRQAEYFQD).

As to quaternary structure, interacts with DDB1 and CUL4A.

It participates in protein modification; protein ubiquitination. May function as a substrate receptor for CUL4-DDB1 E3 ubiquitin-protein ligase complex. The chain is DDB1- and CUL4-associated factor 11 (Dcaf11) from Mus musculus (Mouse).